The chain runs to 76 residues: Esculentin-2SN1 (76 aa).

Residues 1-22 (MFTMKKSLLFLFFLGTISLSLC) form the signal peptide. The propeptide occupies 23 to 37 (EQERGADEDDGGEEV). A disulfide bridge connects residues cysteine 70 and cysteine 76.

This sequence belongs to the frog skin active peptide (FSAP) family. Esculentin subfamily. Expressed by the skin glands.

It is found in the secreted. Antimicrobial peptide. Active against some Gram-negative and a variety of Gram-positive bacterial strains. Not active against fungi. Shows very weak hemolytic activity against human erythrocytes. The polypeptide is Esculentin-2SN1 (Sylvirana spinulosa (Fine-spined frog)).